Reading from the N-terminus, the 146-residue chain is Putative pre-16S rRNA nuclease (146 aa).

The protein belongs to the YqgF nuclease family.

It localises to the cytoplasm. Functionally, could be a nuclease involved in processing of the 5'-end of pre-16S rRNA. This is Putative pre-16S rRNA nuclease from Mycoplasmopsis pulmonis (strain UAB CTIP) (Mycoplasma pulmonis).